An 87-amino-acid chain; its full sequence is Putative regulatory protein GK1166 (87 aa).

It belongs to the RemA family.

This chain is Putative regulatory protein GK1166, found in Geobacillus kaustophilus (strain HTA426).